We begin with the raw amino-acid sequence, 241 residues long: MNAFFEGVQCSLINFNNFAKNYYTFLLKKFCLDGIFMNVEEMERKLKPKGEVSIIGCGRLGVRVAFDLLEVHRGGVEKVYVFDNAKIEENDIVHRRLGGKVGEYKVDFIKRFFGNRVEAFRENITKDNLHLIKGDVAVICIAGGDTIPTTKAIINYCKERGIKTIGTNGVFGIEEKIKVCDAKYAKGPAKFLNLDEEGHIVVGTEKFIRDFEPITPYTLDEIAKRMVIECLRILWSKYYKS.

This is an uncharacterized protein from Methanocaldococcus jannaschii (strain ATCC 43067 / DSM 2661 / JAL-1 / JCM 10045 / NBRC 100440) (Methanococcus jannaschii).